Consider the following 187-residue polypeptide: Pyridoxal 5'-phosphate synthase subunit PdxT (187 aa).

47–49 (GES) lines the L-glutamine pocket. Residue Cys-76 is the Nucleophile of the active site. L-glutamine is bound by residues Arg-102 and 128 to 129 (IR). Catalysis depends on charge relay system residues His-165 and Glu-167.

Belongs to the glutaminase PdxT/SNO family. As to quaternary structure, in the presence of PdxS, forms a dodecamer of heterodimers. Only shows activity in the heterodimer.

It carries out the reaction aldehydo-D-ribose 5-phosphate + D-glyceraldehyde 3-phosphate + L-glutamine = pyridoxal 5'-phosphate + L-glutamate + phosphate + 3 H2O + H(+). The enzyme catalyses L-glutamine + H2O = L-glutamate + NH4(+). It functions in the pathway cofactor biosynthesis; pyridoxal 5'-phosphate biosynthesis. In terms of biological role, catalyzes the hydrolysis of glutamine to glutamate and ammonia as part of the biosynthesis of pyridoxal 5'-phosphate. The resulting ammonia molecule is channeled to the active site of PdxS. This chain is Pyridoxal 5'-phosphate synthase subunit PdxT, found in Methanococcus maripaludis (strain C7 / ATCC BAA-1331).